Reading from the N-terminus, the 507-residue chain is MNLRPEEISSIIRQQIEKYEVQVEVTDVGTVIQIGDGVARVYGLEDCMYSELLEFPGGTLGMALNLEEDNIGCVILGSYLHIKEGDVVKRTGRIASVPVGEALIGRVVNPVGEPLDGKGPIKTDRFRPIEKIAHGVVFRSPVDTPLQTGIKAVDAMIPIGRGQRELIMGDRQTGKTAIAVDTIINQKGQDCICIYVAIGQKASTVANVIQKLHEEGAMDHTIVVVAGASDPSPLLYIAPFAGAAMGEEFMEAGKDVLVVYDDLSKQAAAYRELSLLLRRPPGREAYPGDVFNLHSRLLERAAKLHPNIGGGSMTALPVIETQQGDVSAYIPTNVISITDGQIILEPDLFYAGVRPAINVGLSVSRVGGKAQRTAMRQVAGQLRLDLAQYRELAAFAQFGSDLDRATRARLTRGERMVELLKQGQYNPMPLEEQVMSIYTGVRGYLDSLPADKVRDFEIEFLKYMRTEKPEIGEDIKVNQKITPENESKLKAAVEEFKQMFVTQHGLS.

ATP is bound at residue 169 to 176 (GDRQTGKT).

This sequence belongs to the ATPase alpha/beta chains family. F-type ATPases have 2 components, CF(1) - the catalytic core - and CF(0) - the membrane proton channel. CF(1) has five subunits: alpha(3), beta(3), gamma(1), delta(1), epsilon(1). CF(0) has three main subunits: a(1), b(2) and c(9-12). The alpha and beta chains form an alternating ring which encloses part of the gamma chain. CF(1) is attached to CF(0) by a central stalk formed by the gamma and epsilon chains, while a peripheral stalk is formed by the delta and b chains.

Its subcellular location is the cell membrane. It catalyses the reaction ATP + H2O + 4 H(+)(in) = ADP + phosphate + 5 H(+)(out). Functionally, produces ATP from ADP in the presence of a proton gradient across the membrane. The alpha chain is a regulatory subunit. This Desulforudis audaxviator (strain MP104C) protein is ATP synthase subunit alpha.